The primary structure comprises 189 residues: Molybdenum cofactor guanylyltransferase (189 aa).

GTP contacts are provided by residues 12–14 (LAG), lysine 24, aspartate 68, and aspartate 94. Aspartate 94 contributes to the Mg(2+) binding site.

This sequence belongs to the MobA family. Monomer. Requires Mg(2+) as cofactor.

The protein localises to the cytoplasm. It catalyses the reaction Mo-molybdopterin + GTP + H(+) = Mo-molybdopterin guanine dinucleotide + diphosphate. In terms of biological role, transfers a GMP moiety from GTP to Mo-molybdopterin (Mo-MPT) cofactor (Moco or molybdenum cofactor) to form Mo-molybdopterin guanine dinucleotide (Mo-MGD) cofactor. The sequence is that of Molybdenum cofactor guanylyltransferase from Xanthomonas euvesicatoria pv. vesicatoria (strain 85-10) (Xanthomonas campestris pv. vesicatoria).